The chain runs to 548 residues: T-complex protein 1 subunit theta (548 aa).

The interval 527–548 is disordered; the sequence is QATGGPKPRGPKAQDEDDDGMA.

The protein belongs to the TCP-1 chaperonin family. Heterooligomeric complex.

The protein localises to the cytoplasm. Its function is as follows. Molecular chaperone; assists the folding of proteins upon ATP hydrolysis. Known to play a role, in vitro, in the folding of actin and tubulin. Required for correct subcellular localization of pgl-1. This Caenorhabditis elegans protein is T-complex protein 1 subunit theta (cct-8).